A 549-amino-acid polypeptide reads, in one-letter code: Glucose-6-phosphate isomerase (549 aa).

The active-site Proton donor is Glu-355. Residues His-386 and Lys-514 contribute to the active site.

Belongs to the GPI family.

The protein resides in the cytoplasm. It catalyses the reaction alpha-D-glucose 6-phosphate = beta-D-fructose 6-phosphate. The protein operates within carbohydrate biosynthesis; gluconeogenesis. Its pathway is carbohydrate degradation; glycolysis; D-glyceraldehyde 3-phosphate and glycerone phosphate from D-glucose: step 2/4. Functionally, catalyzes the reversible isomerization of glucose-6-phosphate to fructose-6-phosphate. In Buchnera aphidicola subsp. Acyrthosiphon pisum (strain APS) (Acyrthosiphon pisum symbiotic bacterium), this protein is Glucose-6-phosphate isomerase.